The chain runs to 300 residues: uncharacterized protein (300 aa).

Transmembrane regions (helical) follow at residues 13–35 (LLCIFSQCLFGILYLFSIWLQPL), 45–67 (MLTMIFGLLLILFPTIGCRSLLS), 80–102 (WVLFLLGTLDAGSQFWLFMWAPL), 106–128 (GINIAMGYFLFPLIMAVLGWAWL), 180–202 (IPALQGITLDIILISIPCFIYIL), 217–236 (YWLLLPALGIVSAISLSANL), 243–265 (PVSIFAVLSYIEPILLFLIAVFV), and 275–294 (YFTYVPIWLSLIVIGIEGLL).

The protein belongs to the EamA transporter family.

The protein resides in the cell membrane. This is an uncharacterized protein from Haemophilus influenzae (strain ATCC 51907 / DSM 11121 / KW20 / Rd).